Consider the following 453-residue polypeptide: Kynurenine 3-monooxygenase (453 aa).

This sequence belongs to the aromatic-ring hydroxylase family. KMO subfamily. FAD serves as cofactor.

The enzyme catalyses L-kynurenine + NADPH + O2 + H(+) = 3-hydroxy-L-kynurenine + NADP(+) + H2O. It functions in the pathway cofactor biosynthesis; NAD(+) biosynthesis; quinolinate from L-kynurenine: step 1/3. Catalyzes the hydroxylation of L-kynurenine (L-Kyn) to form 3-hydroxy-L-kynurenine (L-3OHKyn). Required for synthesis of quinolinic acid. The polypeptide is Kynurenine 3-monooxygenase (Salinispora tropica (strain ATCC BAA-916 / DSM 44818 / JCM 13857 / NBRC 105044 / CNB-440)).